Reading from the N-terminus, the 180-residue chain is Large ribosomal subunit protein uL16 (180 aa).

It belongs to the universal ribosomal protein uL16 family.

This Hyperthermus butylicus (strain DSM 5456 / JCM 9403 / PLM1-5) protein is Large ribosomal subunit protein uL16.